We begin with the raw amino-acid sequence, 230 residues long: Biosynthetic peptidoglycan transglycosylase (230 aa).

Residues 11–31 (VLLVLVALFVLYQLWIFTLVL) form a helical membrane-spanning segment.

It belongs to the glycosyltransferase 51 family.

The protein resides in the cell inner membrane. The enzyme catalyses [GlcNAc-(1-&gt;4)-Mur2Ac(oyl-L-Ala-gamma-D-Glu-L-Lys-D-Ala-D-Ala)](n)-di-trans,octa-cis-undecaprenyl diphosphate + beta-D-GlcNAc-(1-&gt;4)-Mur2Ac(oyl-L-Ala-gamma-D-Glu-L-Lys-D-Ala-D-Ala)-di-trans,octa-cis-undecaprenyl diphosphate = [GlcNAc-(1-&gt;4)-Mur2Ac(oyl-L-Ala-gamma-D-Glu-L-Lys-D-Ala-D-Ala)](n+1)-di-trans,octa-cis-undecaprenyl diphosphate + di-trans,octa-cis-undecaprenyl diphosphate + H(+). It participates in cell wall biogenesis; peptidoglycan biosynthesis. Peptidoglycan polymerase that catalyzes glycan chain elongation from lipid-linked precursors. The protein is Biosynthetic peptidoglycan transglycosylase of Aromatoleum aromaticum (strain DSM 19018 / LMG 30748 / EbN1) (Azoarcus sp. (strain EbN1)).